We begin with the raw amino-acid sequence, 668 residues long: UvrABC system protein B (668 aa).

In terms of domain architecture, Helicase ATP-binding spans 25 to 413 (NGINTGLQHQ…QNTVQQVIRP (389 aa)). Residue 38–45 (GVTGSGKT) participates in ATP binding. The Beta-hairpin motif lies at 91–114 (YYDYYQPEAYIAASDTYIEKDSSV). A Helicase C-terminal domain is found at 429–595 (QVEDALSEIN…TIIKNIDDML (167 aa)). In terms of domain architecture, UVR spans 629–664 (TKVIKALEKRMRAYAKELEFEKATTIRDKITEVKQK).

This sequence belongs to the UvrB family. In terms of assembly, forms a heterotetramer with UvrA during the search for lesions. Interacts with UvrC in an incision complex.

It localises to the cytoplasm. Functionally, the UvrABC repair system catalyzes the recognition and processing of DNA lesions. A damage recognition complex composed of 2 UvrA and 2 UvrB subunits scans DNA for abnormalities. Upon binding of the UvrA(2)B(2) complex to a putative damaged site, the DNA wraps around one UvrB monomer. DNA wrap is dependent on ATP binding by UvrB and probably causes local melting of the DNA helix, facilitating insertion of UvrB beta-hairpin between the DNA strands. Then UvrB probes one DNA strand for the presence of a lesion. If a lesion is found the UvrA subunits dissociate and the UvrB-DNA preincision complex is formed. This complex is subsequently bound by UvrC and the second UvrB is released. If no lesion is found, the DNA wraps around the other UvrB subunit that will check the other stand for damage. The chain is UvrABC system protein B from Francisella tularensis subsp. tularensis (strain SCHU S4 / Schu 4).